The following is a 404-amino-acid chain: Putative arginine deiminase (404 aa).

The Amidino-cysteine intermediate role is filled by Cys-394.

Belongs to the arginine deiminase family.

The protein localises to the cytoplasm. The enzyme catalyses L-arginine + H2O = L-citrulline + NH4(+). The protein operates within amino-acid degradation; L-arginine degradation via ADI pathway; carbamoyl phosphate from L-arginine: step 1/2. The protein is Putative arginine deiminase (arcA) of Mycoplasma pneumoniae (strain ATCC 29342 / M129 / Subtype 1) (Mycoplasmoides pneumoniae).